The chain runs to 287 residues: Large ribosomal subunit protein uL2 (287 aa).

The segment at 221–287 is disordered; that stretch reads RGSVMNPCDH…SKRSRGGRDS (67 aa). Residues 258–287 show a composition bias toward basic residues; it reads KTRKRNKPSNRFVLRKRRRVSKRSRGGRDS.

It belongs to the universal ribosomal protein uL2 family. As to quaternary structure, part of the 50S ribosomal subunit. Forms a bridge to the 30S subunit in the 70S ribosome.

Functionally, one of the primary rRNA binding proteins. Required for association of the 30S and 50S subunits to form the 70S ribosome, for tRNA binding and peptide bond formation. It has been suggested to have peptidyltransferase activity; this is somewhat controversial. Makes several contacts with the 16S rRNA in the 70S ribosome. This Prochlorococcus marinus (strain SARG / CCMP1375 / SS120) protein is Large ribosomal subunit protein uL2.